We begin with the raw amino-acid sequence, 421 residues long: uncharacterized protein (421 aa).

This is an uncharacterized protein from Acanthamoeba polyphaga (Amoeba).